Consider the following 684-residue polypeptide: MSSDKLHKVVHEAHDVEARHAPEHFYNSQPGKSYCTDEEHYREMYTQSIEDPAGFFGPLAKEYLDWDRPFTQVQSGSLEHGDIAWFLNGELNASYNCVDRHAFANPDKPALIYEADDESENKVITFGELLRQVSEVAGVLQSWGVKKGDTVAVYLPMIPAAVVAMLAVARLGAIHSVIFAGFSAGSLKERVVDAGCKVVITCDEGKRGGKTVHTKKIVDEGLAGVDSVSKILVFQRTGTQGIPMKPARDFWWHEECVKQRGYLPPVPVNSEDPLFLLYTSGSTGSPKGVVHSTAGYLLGSALTTRFVFDIHPEDVLFTAGDVGWITGHTYALYGPLTLGTATIIFESTPAYPDYGRYWRIIERHRATHFYVAPTALRLIKRVGEEEIAKYDTSSLRVLGSVGEPISPDLWEWYHEKVGKNNCVICDTMWQTESGSHLIAPLAGAVPTKPGSATVPFFGINACIIDPVSGEELKGNDVEGVLAVKSPWPSMARSVWNNHARYFETYLKPYPGYYFTGDGAGRDHDGYYWIRGRVDDVVNVSGHRLSTAEIEAALAEHEGVSEAAVVGITDELTGQAVIAFVSLKDGYLSENAVEGDSTHISPDNLRRELILQVRGEIGPFAAPKTVVVVNDLPKTRSGKIMRRVLRKVASKEADQLGDLSTLANADVVPSIISAVENQFFSQQKK.

CoA is bound by residues 207–210 (RGGK) and Thr-326. ATP-binding positions include 402–404 (GEP), 426–431 (DTMWQT), Asp-517, and Arg-532. Ser-540 serves as a coordination point for CoA. Arg-543 contributes to the ATP binding site. Residue Arg-613 participates in CoA binding.

Belongs to the ATP-dependent AMP-binding enzyme family.

It carries out the reaction acetate + ATP + CoA = acetyl-CoA + AMP + diphosphate. This is Acetyl-coenzyme A synthetase 2 (ACS2) from Kluyveromyces lactis (strain ATCC 8585 / CBS 2359 / DSM 70799 / NBRC 1267 / NRRL Y-1140 / WM37) (Yeast).